Reading from the N-terminus, the 340-residue chain is N-acetyl-gamma-glutamyl-phosphate reductase (340 aa).

Cysteine 151 is an active-site residue.

Belongs to the NAGSA dehydrogenase family. Type 1 subfamily.

It is found in the cytoplasm. The enzyme catalyses N-acetyl-L-glutamate 5-semialdehyde + phosphate + NADP(+) = N-acetyl-L-glutamyl 5-phosphate + NADPH + H(+). The protein operates within amino-acid biosynthesis; L-arginine biosynthesis; N(2)-acetyl-L-ornithine from L-glutamate: step 3/4. Functionally, catalyzes the NADPH-dependent reduction of N-acetyl-5-glutamyl phosphate to yield N-acetyl-L-glutamate 5-semialdehyde. The protein is N-acetyl-gamma-glutamyl-phosphate reductase of Aquifex aeolicus (strain VF5).